The following is a 158-amino-acid chain: D-aminoacyl-tRNA deacylase (158 aa).

The short motif at 144-145 is the Gly-cisPro motif, important for rejection of L-amino acids element; it reads GP.

Belongs to the DTD family. As to quaternary structure, homodimer.

The protein localises to the cytoplasm. The enzyme catalyses glycyl-tRNA(Ala) + H2O = tRNA(Ala) + glycine + H(+). The catalysed reaction is a D-aminoacyl-tRNA + H2O = a tRNA + a D-alpha-amino acid + H(+). In terms of biological role, an aminoacyl-tRNA editing enzyme that deacylates mischarged D-aminoacyl-tRNAs. Also deacylates mischarged glycyl-tRNA(Ala), protecting cells against glycine mischarging by AlaRS. Acts via tRNA-based rather than protein-based catalysis; rejects L-amino acids rather than detecting D-amino acids in the active site. By recycling D-aminoacyl-tRNA to D-amino acids and free tRNA molecules, this enzyme counteracts the toxicity associated with the formation of D-aminoacyl-tRNA entities in vivo and helps enforce protein L-homochirality. This chain is D-aminoacyl-tRNA deacylase, found in Corynebacterium kroppenstedtii (strain DSM 44385 / JCM 11950 / CIP 105744 / CCUG 35717).